The following is a 386-amino-acid chain: ADP,ATP carrier protein 1, mitochondrial (386 aa).

A mitochondrion-targeting transit peptide spans 1–76 (MDQVQHPSVM…PSTASAICVQ (76 aa)). Solcar repeat units lie at residues 84-177 (SSFA…FKRL), 189-281 (KWFA…LKPV), and 289-375 (DSFF…LQLI). Transmembrane regions (helical) follow at residues 86-113 (FAIDFLMGGVSAAVSKTAAAPIERVKLL), 154-178 (TANVIRYFPTQALNFAFKDYFKRLF), 187-207 (YWKWFAGNLASGGAAGASSLL), 257-278 (FNISCVGIIVYRGLYFGMYDSL), and 292-312 (FASFVLGWLITNGAALASYPI). Positions 159 and 171 each coordinate ADP. An ADP-binding site is contributed by R316. The interval 316-321 (RRRMMM) is important for transport activity. Residues 316-321 (RRRMMM) carry the Nucleotide carrier signature motif motif. Residues 352–372 (AGSNILRAIAGAGVLAGYDKL) traverse the membrane as a helical segment.

It belongs to the mitochondrial carrier (TC 2.A.29) family. As to quaternary structure, monomer.

The protein localises to the mitochondrion inner membrane. It carries out the reaction ADP(in) + ATP(out) = ADP(out) + ATP(in). The matrix-open state (m-state) is inhibited by the membrane-permeable bongkrekic acid (BKA). The cytoplasmic-open state (c-state) is inhibited by the membrane-impermeable toxic inhibitor carboxyatractyloside (CATR). In terms of biological role, ADP:ATP antiporter that mediates import of ADP into the mitochondrial matrix for ATP synthesis, and export of ATP out to fuel the cell. Cycles between the cytoplasmic-open state (c-state) and the matrix-open state (m-state): operates by the alternating access mechanism with a single substrate-binding site intermittently exposed to either the cytosolic (c-state) or matrix (m-state) side of the inner mitochondrial membrane. In Gossypium hirsutum (Upland cotton), this protein is ADP,ATP carrier protein 1, mitochondrial (ANT1).